A 125-amino-acid polypeptide reads, in one-letter code: Fumarate reductase subunit D (125 aa).

3 helical membrane-spanning segments follow: residues 29-49, 64-84, and 102-122; these read VTAL…PLGW, NPIT…HAAH, and VIAL…GWML.

It belongs to the FrdD family. As to quaternary structure, part of an enzyme complex containing four subunits: a flavoprotein (FrdA), an iron-sulfur protein (FrdB), and two hydrophobic anchor proteins (FrdC and FrdD).

It is found in the cell membrane. Functionally, anchors the catalytic components of the fumarate reductase complex to the cell membrane, binds quinones. The polypeptide is Fumarate reductase subunit D (Mycobacterium bovis (strain BCG / Tokyo 172 / ATCC 35737 / TMC 1019)).